The primary structure comprises 618 residues: Proline--tRNA ligase (618 aa).

It belongs to the class-II aminoacyl-tRNA synthetase family. ProS type 1 subfamily. In terms of assembly, homodimer.

The protein localises to the cytoplasm. The enzyme catalyses tRNA(Pro) + L-proline + ATP = L-prolyl-tRNA(Pro) + AMP + diphosphate. In terms of biological role, catalyzes the attachment of proline to tRNA(Pro) in a two-step reaction: proline is first activated by ATP to form Pro-AMP and then transferred to the acceptor end of tRNA(Pro). As ProRS can inadvertently accommodate and process non-cognate amino acids such as alanine and cysteine, to avoid such errors it has two additional distinct editing activities against alanine. One activity is designated as 'pretransfer' editing and involves the tRNA(Pro)-independent hydrolysis of activated Ala-AMP. The other activity is designated 'posttransfer' editing and involves deacylation of mischarged Ala-tRNA(Pro). The misacylated Cys-tRNA(Pro) is not edited by ProRS. This chain is Proline--tRNA ligase, found in Streptococcus equi subsp. equi (strain 4047).